A 57-amino-acid chain; its full sequence is uncharacterized protein (57 aa).

This is an uncharacterized protein from Homo sapiens (Human).